Consider the following 131-residue polypeptide: Leptin receptor gene-related protein (131 aa).

4 helical membrane-spanning segments follow: residues 7 to 27 (LVAL…GCAL), 32 to 52 (VYWP…HFIA), 69 to 89 (LAYF…VILA), and 100 to 120 (GLVL…FLIF).

It belongs to the OB-RGRP/VPS55 family. As to quaternary structure, interacts with LEPR. Interacts with RAB13. As to expression, expressed at the highest levels in heart and placenta and at a lesser extent in lung, liver, skeletal muscle, kidney and pancreas.

The protein resides in the golgi apparatus membrane. It is found in the endosome membrane. In terms of biological role, negatively regulates leptin receptor (LEPR) cell surface expression, and thus decreases response to leptin. Negatively regulates growth hormone (GH) receptor cell surface expression in liver. May play a role in liver resistance to GH during periods of reduced nutrient availability. The sequence is that of Leptin receptor gene-related protein (LEPROT) from Homo sapiens (Human).